We begin with the raw amino-acid sequence, 246 residues long: 3-deoxy-manno-octulosonate cytidylyltransferase (246 aa).

The protein belongs to the KdsB family.

The protein localises to the cytoplasm. It catalyses the reaction 3-deoxy-alpha-D-manno-oct-2-ulosonate + CTP = CMP-3-deoxy-beta-D-manno-octulosonate + diphosphate. Its pathway is nucleotide-sugar biosynthesis; CMP-3-deoxy-D-manno-octulosonate biosynthesis; CMP-3-deoxy-D-manno-octulosonate from 3-deoxy-D-manno-octulosonate and CTP: step 1/1. It participates in bacterial outer membrane biogenesis; lipopolysaccharide biosynthesis. In terms of biological role, activates KDO (a required 8-carbon sugar) for incorporation into bacterial lipopolysaccharide in Gram-negative bacteria. This Rickettsia prowazekii (strain Madrid E) protein is 3-deoxy-manno-octulosonate cytidylyltransferase.